A 510-amino-acid polypeptide reads, in one-letter code: 2,3-bisphosphoglycerate-independent phosphoglycerate mutase (510 aa).

Residues Asp-14 and Ser-64 each contribute to the Mn(2+) site. Residue Ser-64 is the Phosphoserine intermediate of the active site. Substrate contacts are provided by residues His-125, 155 to 156, Arg-187, Arg-193, 259 to 262, and Lys-332; these read RD and RADR. Residues Asp-399, His-403, Asp-440, His-441, and His-459 each coordinate Mn(2+).

This sequence belongs to the BPG-independent phosphoglycerate mutase family. Monomer. The cofactor is Mn(2+).

The catalysed reaction is (2R)-2-phosphoglycerate = (2R)-3-phosphoglycerate. The protein operates within carbohydrate degradation; glycolysis; pyruvate from D-glyceraldehyde 3-phosphate: step 3/5. Functionally, catalyzes the interconversion of 2-phosphoglycerate and 3-phosphoglycerate. In Ectopseudomonas mendocina (strain ymp) (Pseudomonas mendocina), this protein is 2,3-bisphosphoglycerate-independent phosphoglycerate mutase.